The primary structure comprises 463 residues: Sodium-coupled neutral amino acid transporter 7 (463 aa).

Ser-28 bears the Phosphoserine mark. Transmembrane regions (helical) follow at residues 56-76 (AVFIVVNACLGAGLLNFPAAF), 82-102 (VAAGIALQMGMLVFIISGLVI), 130-150 (LCEIAIAVYTFGTCIAFLIII), 179-199 (FTISLTAFLFILPLSIPKEIG), 206-226 (SLSVVGTWYVTAIVIIKYIWP), 240-260 (ASWMAVFNAMPTICFGFQCHV), 283-303 (AAMVIALAVYMGTGICGFLTF), 320-340 (VAVAVARAFIILSVLTSYPIL), 372-392 (VLQTLVWFLLTLLLALFIPDI), 396-416 (ISVIGGLAACFIFIFPGLCLI), and 429-449 (ASWWALVSYGVLLVTLGAFIF).

This sequence belongs to the amino acid/polyamine transporter 2 family. Interacts with the mTORC1 complex; this interaction mediates the recruitment of mTORC1 to the lysosome and its subsequent activation.

The protein localises to the lysosome membrane. It is found in the cell projection. Its subcellular location is the axon. It carries out the reaction L-asparagine(in) + Na(+)(in) = L-asparagine(out) + Na(+)(out). The enzyme catalyses L-glutamine(in) + Na(+)(in) = L-glutamine(out) + Na(+)(out). In terms of biological role, symporter that selectively cotransports sodium ions and amino acids, such as L-glutamine and L-asparagine from the lysosome into the cytoplasm and may participates in mTORC1 activation. The transport activity requires an acidic lysosomal lumen. This is Sodium-coupled neutral amino acid transporter 7 from Rattus norvegicus (Rat).